Reading from the N-terminus, the 599-residue chain is Elongation factor 4 (599 aa).

The tr-type G domain maps to 2–184; sequence KHIRNFSIIA…RLVRDIPPPE (183 aa). GTP is bound by residues 14 to 19 and 131 to 134; these read DHGKST and NKID.

Belongs to the TRAFAC class translation factor GTPase superfamily. Classic translation factor GTPase family. LepA subfamily.

Its subcellular location is the cell inner membrane. The enzyme catalyses GTP + H2O = GDP + phosphate + H(+). Its function is as follows. Required for accurate and efficient protein synthesis under certain stress conditions. May act as a fidelity factor of the translation reaction, by catalyzing a one-codon backward translocation of tRNAs on improperly translocated ribosomes. Back-translocation proceeds from a post-translocation (POST) complex to a pre-translocation (PRE) complex, thus giving elongation factor G a second chance to translocate the tRNAs correctly. Binds to ribosomes in a GTP-dependent manner. In Erwinia tasmaniensis (strain DSM 17950 / CFBP 7177 / CIP 109463 / NCPPB 4357 / Et1/99), this protein is Elongation factor 4.